We begin with the raw amino-acid sequence, 110 residues long: uncharacterized protein (110 aa).

Transmembrane regions (helical) follow at residues 6–26 (VSLY…IYNV) and 38–58 (TSGP…IIGP).

It is found in the membrane. This is an uncharacterized protein from Saccharomyces cerevisiae (strain ATCC 204508 / S288c) (Baker's yeast).